Consider the following 251-residue polypeptide: MLAKRIIPCLDVRDGRVVKGINFEGLRDAGSILEQARFYNNELADELVFLDISASLESRRTTLEEVLKVSGEVFIPLTVGGGINSVERAREVFLHGADKVSVNTAAVKEPELISRIAEKYGSQAVVVAIDIKKVDGRYIVHTHSGKQPTAYEALEWALKVQELGAGEILLTSMDRDGTKEGYDNDSLALISTAVHIPVIASGGAGSLEHLYDGFTKGHADAALAASIFHFRQHSIREAKQYLRDRGITVRL.

Catalysis depends on residues Asp-11 and Asp-130.

The protein belongs to the HisA/HisF family. As to quaternary structure, heterodimer of HisH and HisF.

The protein localises to the cytoplasm. It carries out the reaction 5-[(5-phospho-1-deoxy-D-ribulos-1-ylimino)methylamino]-1-(5-phospho-beta-D-ribosyl)imidazole-4-carboxamide + L-glutamine = D-erythro-1-(imidazol-4-yl)glycerol 3-phosphate + 5-amino-1-(5-phospho-beta-D-ribosyl)imidazole-4-carboxamide + L-glutamate + H(+). It functions in the pathway amino-acid biosynthesis; L-histidine biosynthesis; L-histidine from 5-phospho-alpha-D-ribose 1-diphosphate: step 5/9. In terms of biological role, IGPS catalyzes the conversion of PRFAR and glutamine to IGP, AICAR and glutamate. The HisF subunit catalyzes the cyclization activity that produces IGP and AICAR from PRFAR using the ammonia provided by the HisH subunit. The protein is Imidazole glycerol phosphate synthase subunit HisF of Chlorobium luteolum (strain DSM 273 / BCRC 81028 / 2530) (Pelodictyon luteolum).